The sequence spans 473 residues: GTPase Der (473 aa).

EngA-type G domains are found at residues 3-167 and 203-378; these read FTVA…GKDR and LRVA…RVWN. GTP-binding positions include 9-16, 56-60, 119-122, 209-216, 256-260, and 321-324; these read GRPNVGKS, DTAGL, NKSE, GRPNAGKS, DTAGM, and NKWD. In terms of domain architecture, KH-like spans 379–463; the sequence is KRISTARLNR…PIRIHFRSAE (85 aa).

Belongs to the TRAFAC class TrmE-Era-EngA-EngB-Septin-like GTPase superfamily. EngA (Der) GTPase family. In terms of assembly, associates with the 50S ribosomal subunit.

In terms of biological role, GTPase that plays an essential role in the late steps of ribosome biogenesis. The sequence is that of GTPase Der from Rhizobium etli (strain CIAT 652).